The sequence spans 264 residues: MKVIKTLSIINFFIFVTFNIKNESKYSNTFINNAYNMSIRRSMANEGSNTNSVGANAPNADTIASGSQRSTNSASTSTTNNGESQTTTPTAADTIASGSQRSTNSASTSTTNNGESQTTTPTAADTPTATESISPSPPITTTESSKFWQCTNKTDGKGEESEKQNELNESTEEGPKAPQEPQTAENENPAAPENKGTGQHGHMHGSRNNHPQNTSDSQKECTDGNKENCGAATSLLSNSSNIASINKFVVLISATLVLSFAIFI.

Positions 1-20 are cleaved as a signal peptide; it reads MKVIKTLSIINFFIFVTFNI. 2 N-linked (GlcNAc...) asparagine glycosylation sites follow: asparagine 22 and asparagine 36. Positions 44–190 are polymorphic region; that stretch reads ANEGSNTNSV…PQTAENENPA (147 aa). The tract at residues 46–227 is disordered; sequence EGSNTNSVGA…QKECTDGNKE (182 aa). Tandem repeats lie at residues 60-91 and 92-123. Residues 60-123 are 2 X 32 AA perfects repeats; that stretch reads ADTIASGSQR…GESQTTTPTA (64 aa). Residues 70 to 81 are compositionally biased toward low complexity; the sequence is STNSASTSTTNN. Polar residues predominate over residues 82–101; it reads GESQTTTPTAADTIASGSQR. A compositionally biased stretch (low complexity) spans 102-145; it reads STNSASTSTTNNGESQTTTPTAADTPTATESISPSPPITTTESS. Residues 154–166 are compositionally biased toward basic and acidic residues; it reads TDGKGEESEKQNE. N-linked (GlcNAc...) asparagine glycosylation is present at asparagine 213. The span at 217 to 226 shows a compositional bias: basic and acidic residues; it reads SQKECTDGNK. A disulfide bond links cysteine 221 and cysteine 229. Asparagine 238 carries an N-linked (GlcNAc...) asparagine glycan. Residue asparagine 238 is the site of GPI-anchor amidated asparagine attachment. A propeptide spans 239–264 (removed in mature form); it reads SSNIASINKFVVLISATLVLSFAIFI.

The protein resides in the cell membrane. Its function is as follows. May play a role in the merozoite attachment to the erythrocyte. The polypeptide is Merozoite surface protein 2 (Plasmodium falciparum (isolate FC27 / Papua New Guinea)).